The chain runs to 282 residues: MALLSFERKYRVPGGTLIGGSLFDFWVGPFYVGFFGVTTIFFATLGFLLILWGAAMQGTWNPQLISIFPPPVENGLNVAALDKGGLWQVITVCATGAFCSWALREVEICRKLGIGFHIPVAFSMAIFAYLTLVVIRPMMMGSWGYAFPYGIWTHLDWVSNTGYTYGNFHYNPFHMLGISLFFTTAWALAMHGALVLSAANPVKGKTMRTPDHEDTYFRDLMGYSVGTLGIHRLGLLLALNAVFWSACCMLVSGTIYFDLWSDWWYWWVNMPFWADMAGGING.

Transmembrane regions (helical) follow at residues 33–56, 85–113, and 116–141; these read GFFGVTTIFFATLGFLLILWGAAM, GLWQVITVCATGAFCSWALREVEICRKLG, and FHIPVAFSMAIFAYLTLVVIRPMMMG. Residues His154 and His174 each coordinate (7R,8Z)-bacteriochlorophyll b. A helical transmembrane segment spans residues 171 to 200; that stretch reads NPFHMLGISLFFTTAWALAMHGALVLSAAN. His191 provides a ligand contact to Fe cation. Phe217 contributes to the a ubiquinone binding site. Residues 226–252 form a helical membrane-spanning segment; that stretch reads GTLGIHRLGLLLALNAVFWSACCMLVS. His231 lines the Fe cation pocket.

The protein belongs to the reaction center PufL/M/PsbA/D family. Reaction center is composed of four bacteriochlorophylls, two bacteriopheophytins, two ubiquinones, one iron, and three highly hydrophobic polypeptide chains (designated L, M, and H).

The protein resides in the cellular chromatophore membrane. Functionally, the reaction center is a membrane-bound complex that mediates the initial photochemical event in the electron transfer process of photosynthesis. In Rhodobacter capsulatus (Rhodopseudomonas capsulata), this protein is Reaction center protein L chain (pufL).